The primary structure comprises 240 residues: Keratinocyte-associated protein 3 (240 aa).

The next 4 membrane-spanning stretches (helical) occupy residues 21 to 41 (VGLA…VLHG), 63 to 83 (VISV…LLAS), 95 to 115 (LLAL…GLLL), and 163 to 183 (ALAL…LSGY).

This sequence belongs to the TMEM54 family.

It localises to the membrane. The chain is Keratinocyte-associated protein 3 (KRTCAP3) from Bos taurus (Bovine).